A 725-amino-acid polypeptide reads, in one-letter code: ABC transporter G family member 7 (725 aa).

Residues 12–34 (VVSGIGGNGVGGALAAVAAALLV) traverse the membrane as a helical segment. The 247-residue stretch at 70 to 316 (IRWRNITCSL…YFGNFGFLCP (247 aa)) folds into the ABC transporter domain. ATP is bound at residue 108 to 115 (GPSGSGKT). The ABC transmembrane type-2 domain occupies 392-603 (RQFFLLLKRA…AFQGLCINEF (212 aa)). 4 helical membrane passes run 446 to 466 (LLQV…VGVF), 493 to 513 (IAEI…LYPM), 528 to 548 (GIVT…GAMV), and 553 to 573 (AAMA…GYYV). The interval 676-725 (NSGVQLDKAEVDQTEKPEDDDINQPLDDQNQTSDSDDELDEIRPFVLEGL) is disordered. Residues 682 to 691 (DKAEVDQTEK) are compositionally biased toward basic and acidic residues.

This sequence belongs to the ABC transporter superfamily. ABCG family. Eye pigment precursor importer (TC 3.A.1.204) subfamily.

It localises to the membrane. The protein is ABC transporter G family member 7 (ABCG7) of Arabidopsis thaliana (Mouse-ear cress).